A 432-amino-acid chain; its full sequence is EF-hand calcium-binding domain-containing protein 3 (432 aa).

EF-hand domains are found at residues 45–80 (AQLEAFRNAYNFFTKDRTGCIDSHGLISTIAKLGMN) and 81–116 (LNTYDIYNELKCADLDRDGKINFSDFINVLTDKKLF). The Ca(2+) site is built by aspartate 94, aspartate 96, aspartate 98, lysine 100, and aspartate 105. Tyrosine 273 is modified (phosphotyrosine). Residues 394–432 (SMNKSSPSNSGLSSPSDFSESDPETGRKRKRKSSRGFRQ) are disordered. Positions 395–411 (MNKSSPSNSGLSSPSDF) are enriched in low complexity. The span at 420–432 (RKRKRKSSRGFRQ) shows a compositional bias: basic residues.

The protein is EF-hand calcium-binding domain-containing protein 3 (Efcab3) of Mus musculus (Mouse).